A 1827-amino-acid chain; its full sequence is Laminin subunit beta-4 (1827 aa).

The N-terminal stretch at 1–21 is a signal peptide; that stretch reads MLLRLELSALLLLLIAAPVRL. A Laminin N-terminal domain is found at 26 to 266; sequence VGNSCYPNLG…ALYEMVVRGS (241 aa). An N-linked (GlcNAc...) asparagine glycan is attached at Asn231. 19 disulfide bridges follow: Cys267-Cys276, Cys269-Cys297, Cys299-Cys308, Cys311-Cys331, Cys334-Cys343, Cys336-Cys361, Cys364-Cys373, Cys376-Cys394, Cys397-Cys410, Cys399-Cys417, Cys419-Cys428, Cys431-Cys446, Cys449-Cys463, Cys451-Cys470, Cys472-Cys481, Cys484-Cys498, Cys501-Cys513, Cys503-Cys520, and Cys522-Cys531. 4 Laminin EGF-like domains span residues 267–333, 334–396, 397–448, and 449–500; these read CFCN…VCKR, CNCH…ACIP, CDCD…GCQL, and CRCN…GCIP. A Laminin EGF-like 5; truncated domain is found at 501–544; that stretch reads CDCDIGGALKTECSSVDGQCKCRPNMVGQKCNDPAPGYFLAPLD. Residues 540-847 enclose the Laminin IV type B domain; sequence LAPLDFYIYE…LIGSMSAFIH (308 aa). 32 disulfides stabilise this stretch: Cys853-Cys865, Cys855-Cys872, Cys874-Cys883, Cys886-Cys898, Cys901-Cys913, Cys903-Cys920, Cys922-Cys931, Cys934-Cys944, Cys947-Cys956, Cys949-Cys963, Cys966-Cys975, Cys978-Cys992, Cys995-Cys1011, Cys997-Cys1022, Cys1024-Cys1033, Cys1036-Cys1051, Cys1054-Cys1068, Cys1056-Cys1075, Cys1078-Cys1087, Cys1090-Cys1103, Cys1106-Cys1126, Cys1108-Cys1133, Cys1135-Cys1144, Cys1147-Cys1160, Cys1163-Cys1175, Cys1165-Cys1182, Cys1184-Cys1193, Cys1196-Cys1208, Cys1211-Cys1223, Cys1213-Cys1230, Cys1232-Cys1241, and Cys1244-Cys1255. Laminin EGF-like domains are found at residues 853–900, 901–946, 947–994, 995–1053, 1054–1105, 1106–1162, 1163–1210, and 1211–1257; these read CNCH…GCSP, CDCD…LCRR, CQCN…PCEP, CLCP…RCKE, CCCN…DCKE, CSCD…GCQP, CNCN…QCMF, and CDCN…ACEP. N-linked (GlcNAc...) asparagine glycosylation is present at Asn1001. The segment at 1258-1449 is domain II; it reads CHACNHLWEK…LSAANINEEV (192 aa). Coiled coils occupy residues 1294 to 1335 and 1385 to 1449; these read ELQH…EIID and NKIK…NEEV. N-linked (GlcNAc...) asparagine glycosylation is present at Asn1329. The tract at residues 1450-1476 is domain alpha; sequence CGAPGDAECEKAKCGGALCGKCGGPDC. Residues 1477 to 1827 form a domain I region; it reads TGSLPISLNA…KVQRYNLCSP (351 aa). Asn1485, Asn1496, Asn1513, Asn1533, Asn1599, Asn1629, Asn1644, Asn1672, Asn1686, Asn1702, Asn1726, Asn1745, Asn1750, and Asn1761 each carry an N-linked (GlcNAc...) asparagine glycan. Coiled coils occupy residues 1485-1554 and 1584-1820; these read NASK…EKVK and DEIK…DKVQ.

Laminin is a complex glycoprotein, consisting of three different polypeptide chains (alpha, beta, gamma), which are bound to each other by disulfide bonds into a cross-shaped molecule comprising one long and three short arms with globules at each end.

It is found in the secreted. It localises to the extracellular space. The protein resides in the extracellular matrix. The protein localises to the basement membrane. Binding to cells via a high affinity receptor, laminin is thought to mediate the attachment, migration and organization of cells into tissues during embryonic development by interacting with other extracellular matrix components. Positively regulates apical-basal distribution of Muller glia cells in the retina. The polypeptide is Laminin subunit beta-4 (lamb4) (Danio rerio (Zebrafish)).